The sequence spans 396 residues: Digeranylgeranylglycerophospholipid reductase (396 aa).

Residues G14, E33, C44, G45, G47, R100, A124, E162, D283, G295, and I296 each coordinate FAD. A 2,3-bis-O-(geranylgeranyl)-sn-glycerol 1-phospholipid contacts are provided by K338 and V374.

Belongs to the geranylgeranyl reductase family. DGGGPL reductase subfamily. As to quaternary structure, monomer. FAD serves as cofactor.

The protein resides in the cell membrane. The catalysed reaction is 2,3-bis-O-(phytanyl)-sn-glycerol 1-phosphate + 8 NADP(+) = 2,3-bis-O-(geranylgeranyl)-sn-glycerol 1-phosphate + 8 NADPH + 8 H(+). It carries out the reaction 2,3-bis-O-(phytanyl)-sn-glycerol 1-phosphate + 8 NAD(+) = 2,3-bis-O-(geranylgeranyl)-sn-glycerol 1-phosphate + 8 NADH + 8 H(+). The enzyme catalyses a 2,3-bis-O-phytanyl-sn-glycerol 1-phospholipid + 8 A = a 2,3-bis-O-(geranylgeranyl)-sn-glycerol 1-phospholipid + 8 AH2. It catalyses the reaction CDP-2,3-bis-O-(geranylgeranyl)-sn-glycerol + 8 AH2 = CDP-2,3-bis-O-(phytanyl)-sn-glycerol + 8 A. The catalysed reaction is archaetidylserine + 8 AH2 = 2,3-bis-O-phytanyl-sn-glycero-3-phospho-L-serine + 8 A. Its pathway is membrane lipid metabolism; glycerophospholipid metabolism. Is involved in the reduction of 2,3-digeranylgeranylglycerophospholipids (unsaturated archaeols) into 2,3-diphytanylglycerophospholipids (saturated archaeols) in the biosynthesis of archaeal membrane lipids. Catalyzes the formation of archaetidic acid (2,3-di-O-phytanyl-sn-glyceryl phosphate) from 2,3-di-O-geranylgeranylglyceryl phosphate (DGGGP) via the hydrogenation of each double bond of the isoprenoid chains. Can use both NADH and NADPH as electron donors. Also catalyzes the reduction of 2,3-di-O-geranylgeranylglyceryl phosphate analogs such as 2,3-di-O-phytyl-sn-glyceryl phosphate (DPHGP), 3-O-(2,3-di-O-phytyl-sn-glycero-phospho)-sn-glycerol (DPHGPG) and 2,3-di-O-phytyl-sn-glycero-phosphoethanolamine (DPHGPE). Is not active toward 2,3-di-O-geranylgeranylglycerol. Is also probably able to reduce double bonds of geranyl groups in CDP-2,3-bis-O-(geranylgeranyl)-sn-glycerol and archaetidylserine, thus acting at various stages in the biosynthesis of archaeal membrane lipids. The polypeptide is Digeranylgeranylglycerophospholipid reductase (Thermoplasma acidophilum (strain ATCC 25905 / DSM 1728 / JCM 9062 / NBRC 15155 / AMRC-C165)).